Consider the following 307-residue polypeptide: Glutaminase (307 aa).

Residues S66, N117, E161, N168, Y192, Y243, and V261 each coordinate substrate.

It belongs to the glutaminase family. Homotetramer.

The catalysed reaction is L-glutamine + H2O = L-glutamate + NH4(+). In Serratia proteamaculans (strain 568), this protein is Glutaminase.